The primary structure comprises 999 residues: Caspase recruitment domain-containing protein 14 (999 aa).

Residues 15–107 form the CARD domain; the sequence is DEEMLWDMLE…DVYTLVTGLQ (93 aa). The stretch at 125–411 forms a coiled coil; the sequence is TECLAGAISS…QLRRLQAEAP (287 aa). A maintains the protein in an inactive state region spans residues 409-565; the sequence is EAPGGPKQEA…RRPARKILSQ (157 aa). Residue serine 541 is modified to Phosphoserine. The PDZ domain occupies 572-655; sequence QGDALLEQIG…SCYLSVKINT (84 aa). Residues 803-986 enclose the Guanylate kinase-like domain; sequence SESCFTLAPY…LLSCVRLAIA (184 aa).

Interacts (via CARD domain) with BCL10 (via CARD domain). Forms a complex with MALT1 and BCL10; resulting in the formation of a CBM (CARD14-BLC10-MALT1) complex. Interacts with TRAF2, TRAF3 and TRAF6.

It localises to the cytoplasm. Functionally, acts as a scaffolding protein that can activate the inflammatory transcription factor NF-kappa-B and p38/JNK MAP kinase signaling pathways. Forms a signaling complex with BCL10 and MALT1, and activates MALT1 proteolytic activity and inflammatory gene expression. MALT1 is indispensable for CARD14-induced activation of NF-kappa-B and p38/JNK MAP kinases. May play a role in signaling mediated by TRAF2, TRAF3 and TRAF6 and protects cells against apoptosis. This is Caspase recruitment domain-containing protein 14 (Card14) from Mus musculus (Mouse).